The primary structure comprises 328 residues: Biotin synthase (328 aa).

The 228-residue stretch at 48 to 275 (NRIQLSKLLN…KSHVRLTAGR (228 aa)) folds into the Radical SAM core domain. The [4Fe-4S] cluster site is built by Cys63, Cys67, and Cys70. The [2Fe-2S] cluster site is built by Cys107, Cys138, Cys198, and Arg270.

The protein belongs to the radical SAM superfamily. Biotin synthase family. As to quaternary structure, homodimer. [4Fe-4S] cluster is required as a cofactor. It depends on [2Fe-2S] cluster as a cofactor.

The enzyme catalyses (4R,5S)-dethiobiotin + (sulfur carrier)-SH + 2 reduced [2Fe-2S]-[ferredoxin] + 2 S-adenosyl-L-methionine = (sulfur carrier)-H + biotin + 2 5'-deoxyadenosine + 2 L-methionine + 2 oxidized [2Fe-2S]-[ferredoxin]. It participates in cofactor biosynthesis; biotin biosynthesis; biotin from 7,8-diaminononanoate: step 2/2. Its function is as follows. Catalyzes the conversion of dethiobiotin (DTB) to biotin by the insertion of a sulfur atom into dethiobiotin via a radical-based mechanism. The chain is Biotin synthase from Brucella abortus (strain S19).